The chain runs to 37 residues: Large ribosomal subunit protein bL36A (37 aa).

The protein belongs to the bacterial ribosomal protein bL36 family.

The sequence is that of Large ribosomal subunit protein bL36A from Leifsonia xyli subsp. xyli (strain CTCB07).